A 2552-amino-acid polypeptide reads, in one-letter code: Probable polyketide synthase 40 (2552 aa).

The Ketosynthase family 3 (KS3) domain occupies 13-443; that stretch reads CNKVAIIGIG…GSNCCLIVSS (431 aa). Active-site for beta-ketoacyl synthase activity residues include Cys-179, His-320, and His-362. The segment at 629–662 is acyl/malonyl transferase; the sequence is GIKPSIIVGHSLGEISSSYCSGMIDLDTFCYLIY. Catalysis depends on Ser-639, which acts as the For acyl/malonyl transferase activity. Residues 928-1063 form an N-terminal hotdog fold region; sequence INHLGISNSN…ANFQLFSRGQ (136 aa). The PKS/mFAS DH domain occupies 928–1235; the sequence is INHLGISNSN…FKSTTKIKDS (308 aa). Catalysis depends on His-962, which acts as the Proton acceptor; for dehydratase activity. The interval 1087–1235 is C-terminal hotdog fold; it reads NLTKLSKQEL…FKSTTKIKDS (149 aa). Catalysis depends on Asp-1149, which acts as the Proton donor; for dehydratase activity. Residues 2467–2546 form the Carrier domain; the sequence is DNVELTVDQL…SFIQLVKNSI (80 aa). At Ser-2505 the chain carries O-(pantetheine 4'-phosphoryl)serine.

It depends on pantetheine 4'-phosphate as a cofactor.

Functionally, probable polyketide synthase. The polypeptide is Probable polyketide synthase 40 (pks40) (Dictyostelium discoideum (Social amoeba)).